The following is a 351-amino-acid chain: Histidinol-phosphate aminotransferase (351 aa).

Residue Lys-213 is modified to N6-(pyridoxal phosphate)lysine.

The protein belongs to the class-II pyridoxal-phosphate-dependent aminotransferase family. Histidinol-phosphate aminotransferase subfamily. In terms of assembly, homodimer. Pyridoxal 5'-phosphate serves as cofactor.

It catalyses the reaction L-histidinol phosphate + 2-oxoglutarate = 3-(imidazol-4-yl)-2-oxopropyl phosphate + L-glutamate. It functions in the pathway amino-acid biosynthesis; L-histidine biosynthesis; L-histidine from 5-phospho-alpha-D-ribose 1-diphosphate: step 7/9. The polypeptide is Histidinol-phosphate aminotransferase (Clostridium kluyveri (strain NBRC 12016)).